The chain runs to 316 residues: 4-hydroxy-3-methylbut-2-enyl diphosphate reductase (316 aa).

Residue Cys12 coordinates [4Fe-4S] cluster. The (2E)-4-hydroxy-3-methylbut-2-enyl diphosphate site is built by His41 and His74. Residues His41 and His74 each coordinate dimethylallyl diphosphate. Positions 41 and 74 each coordinate isopentenyl diphosphate. Cys96 provides a ligand contact to [4Fe-4S] cluster. His124 lines the (2E)-4-hydroxy-3-methylbut-2-enyl diphosphate pocket. Residue His124 coordinates dimethylallyl diphosphate. His124 contributes to the isopentenyl diphosphate binding site. Glu126 functions as the Proton donor in the catalytic mechanism. Residue Thr165 participates in (2E)-4-hydroxy-3-methylbut-2-enyl diphosphate binding. Position 195 (Cys195) interacts with [4Fe-4S] cluster. Residues Ser223, Ser224, Asn225, and Ser267 each contribute to the (2E)-4-hydroxy-3-methylbut-2-enyl diphosphate site. Positions 223, 224, 225, and 267 each coordinate dimethylallyl diphosphate. 4 residues coordinate isopentenyl diphosphate: Ser223, Ser224, Asn225, and Ser267.

Belongs to the IspH family. It depends on [4Fe-4S] cluster as a cofactor.

It carries out the reaction isopentenyl diphosphate + 2 oxidized [2Fe-2S]-[ferredoxin] + H2O = (2E)-4-hydroxy-3-methylbut-2-enyl diphosphate + 2 reduced [2Fe-2S]-[ferredoxin] + 2 H(+). It catalyses the reaction dimethylallyl diphosphate + 2 oxidized [2Fe-2S]-[ferredoxin] + H2O = (2E)-4-hydroxy-3-methylbut-2-enyl diphosphate + 2 reduced [2Fe-2S]-[ferredoxin] + 2 H(+). It participates in isoprenoid biosynthesis; dimethylallyl diphosphate biosynthesis; dimethylallyl diphosphate from (2E)-4-hydroxy-3-methylbutenyl diphosphate: step 1/1. Its pathway is isoprenoid biosynthesis; isopentenyl diphosphate biosynthesis via DXP pathway; isopentenyl diphosphate from 1-deoxy-D-xylulose 5-phosphate: step 6/6. Its function is as follows. Catalyzes the conversion of 1-hydroxy-2-methyl-2-(E)-butenyl 4-diphosphate (HMBPP) into a mixture of isopentenyl diphosphate (IPP) and dimethylallyl diphosphate (DMAPP). Acts in the terminal step of the DOXP/MEP pathway for isoprenoid precursor biosynthesis. The protein is 4-hydroxy-3-methylbut-2-enyl diphosphate reductase of Acidithiobacillus ferrooxidans (strain ATCC 53993 / BNL-5-31) (Leptospirillum ferrooxidans (ATCC 53993)).